Here is a 135-residue protein sequence, read N- to C-terminus: UPF0251 protein Hore_18270 (135 aa).

Belongs to the UPF0251 family.

This chain is UPF0251 protein Hore_18270, found in Halothermothrix orenii (strain H 168 / OCM 544 / DSM 9562).